Consider the following 703-residue polypeptide: MTSRIRFLMCPPDHYDVDYVINPWMEGNIHKSSRDRAVEQWQGLYQILKEHAIVDLVTPQKGWPDLVFTANAGLVLGDNVVLSRFLHKERQGEEPYFKEWFEGNGYTVYELPKDLPFEGAGDALLDREGRWLWAGYGFRSELDSHPYLAKWLDIEVLSLRLIDERFYHLDTCFCPLANGYLLYYPGAFDSYSNRLIEMRVAPEKRIAIAEADAVNFACNTVNVESIVIMNKASDALKQSLTGVGFQVLETPLTEFLKAGGAAKCLTLRVTEPVRDEVHANVYVESRIIRIEGHLLDSGLINRALDMIVDTGGSFQVLNFNLGEQRQSTSAAEVKVSAPSHEVMEEIISLLIDLGAVDLPQDERDAKLEPVIQDGVAPDDFYVSTIYPTEVRINGQWIKVENQRMDGAIAITQTPNGLLAQCKILRDLKAGEQVIVDVLGIRTIRKTESREQRNTQEFSFMSGGVSSERRVELVVEQVAWELRKIRDAGGKVVVTAGPVVIHTGGGEHLSRLIREGYVQALLGGNAIAVHDIEQNMMGTSLGVDMKRGVAVRGGHRHHLKVINTIRRHGSIAKGVESGIIRSGVMYECVRNQIPFVLAGSIRDDGPLPDTQMDLIKAQEEYAKHLEGAEMILMLSSMLHSIGVGNMTPAGVKMVCVDINPAVVTKLSDRGSIESVGVVTDVGLFLSLLTQQLDKLTSPYVSKVG.

Residues 10–269 (CPPDHYDVDY…GAAKCLTLRV (260 aa)) form an arginine dihydrolase region. The L-arginine site is built by Asn22, Asp65, Asn71, Arg90, and Arg139. Position 22 (Asn22) interacts with L-ornithine. L-ornithine contacts are provided by Arg90, Arg139, and His168. His168 acts as the Proton donor/acceptor in catalysis. Asp170 and Ala258 together coordinate L-arginine. Residue Cys264 participates in L-ornithine binding. The Nucleophile role is filled by Cys264. Positions 285-694 (SRIIRIEGHL…SLLTQQLDKL (410 aa)) are ornithine cyclodeaminase. The NAD(+) site is built by Asn524, Ala525, Asp603, Ser635, Met636, Leu637, His638, Asp656, Asp679, and Val680.

It in the N-terminal section; belongs to the DDAH family. This sequence in the C-terminal section; belongs to the AgrE/ArgZ ornithine cyclodeaminase family. As to quaternary structure, homotetramer. NAD(+) is required as a cofactor.

It catalyses the reaction L-arginine + 2 H2O + 2 H(+) = L-ornithine + 2 NH4(+) + CO2. It carries out the reaction L-ornithine = L-proline + NH4(+). Ornithine cyclodeaminase activity is inhibited by ATP. In terms of biological role, bifunctional enzyme involved in a cyanobacterial arginine utilization pathway that produces glutamate and enables cellular adaptation to nitrogen fluctuations. Catalyzes the hydrolysis of arginine to ornithine, with the release of ammonia and carbon dioxide. Then, catalyzes the conversion of ornithine to proline, with the release of ammonia. The chain is Bifunctional arginine dihydrolase/ornithine cyclodeaminase AgrE from Nostoc sp. (strain PCC 7120 / SAG 25.82 / UTEX 2576).